The sequence spans 175 residues: Alpha-crystallin B chain (175 aa).

Met-1 is subject to N-acetylmethionine. At Ser-19 the chain carries Phosphoserine. Residue Ser-41 is glycosylated (O-linked (GlcNAc) serine). A phosphoserine mark is found at Ser-45 and Ser-59. Residues 56-164 (RAPSWIDTGL…PERTIPITRE (109 aa)) form the sHSP domain. Position 83 (His-83) interacts with Zn(2+). N-linked (Glc) (glycation) lysine glycosylation occurs at Lys-90. The residue at position 92 (Lys-92) is an N6-acetyllysine; alternate. Lys-92 carries an N-linked (Glc) (glycation) lysine; alternate glycan. 4 residues coordinate Zn(2+): His-104, Glu-106, His-111, and His-119. The disordered stretch occupies residues 144–175 (TVNGPRKQASGPERTIPITREEKPAVTAAPKK). Position 166 is an N6-acetyllysine (Lys-166). O-linked (GlcNAc) threonine glycosylation is present at Thr-170.

The protein belongs to the small heat shock protein (HSP20) family. Heteromer composed of three CRYAA and one CRYAB subunits. Aggregates with homologous proteins, including the small heat shock protein HSPB1, to form large heteromeric complexes. Inter-subunit bridging via zinc ions enhances stability, which is crucial as there is no protein turn over in the lens. Interacts with HSPBAP1 and TTN/titin. Interacts with TMEM109; in the cellular response to DNA damage. Interacts with DES; binds rapidly during early stages of DES filament assembly and a reduced binding seen in the later stages. Interacts with TMED10; the interaction mediates the translocation from the cytoplasm into the ERGIC (endoplasmic reticulum-Golgi intermediate compartment) and thereby secretion. Interacts with ATP6V1A and with MTOR, forming a ternary complex. It is not known whether either Lys-90, or Lys-92, or both are glycated. In terms of tissue distribution, lens as well as other tissues.

Its subcellular location is the cytoplasm. The protein localises to the nucleus. It localises to the secreted. It is found in the lysosome. Functionally, may contribute to the transparency and refractive index of the lens. Has chaperone-like activity, preventing aggregation of various proteins under a wide range of stress conditions. In lens epithelial cells, stabilizes the ATP6V1A protein, preventing its degradation by the proteasome. In Bos taurus (Bovine), this protein is Alpha-crystallin B chain (CRYAB).